Here is a 161-residue protein sequence, read N- to C-terminus: ATP synthase subunit b (161 aa).

Residues 2-22 (VIEWGTALYQLLAFAVLLLIL) form a helical membrane-spanning segment.

The protein belongs to the ATPase B chain family. As to quaternary structure, F-type ATPases have 2 components, F(1) - the catalytic core - and F(0) - the membrane proton channel. F(1) has five subunits: alpha(3), beta(3), gamma(1), delta(1), epsilon(1). F(0) has three main subunits: a(1), b(2) and c(10-14). The alpha and beta chains form an alternating ring which encloses part of the gamma chain. F(1) is attached to F(0) by a central stalk formed by the gamma and epsilon chains, while a peripheral stalk is formed by the delta and b chains.

The protein resides in the cell membrane. Its function is as follows. F(1)F(0) ATP synthase produces ATP from ADP in the presence of a proton or sodium gradient. F-type ATPases consist of two structural domains, F(1) containing the extramembraneous catalytic core and F(0) containing the membrane proton channel, linked together by a central stalk and a peripheral stalk. During catalysis, ATP synthesis in the catalytic domain of F(1) is coupled via a rotary mechanism of the central stalk subunits to proton translocation. In terms of biological role, component of the F(0) channel, it forms part of the peripheral stalk, linking F(1) to F(0). In Shouchella clausii (strain KSM-K16) (Alkalihalobacillus clausii), this protein is ATP synthase subunit b.